A 509-amino-acid polypeptide reads, in one-letter code: 5-hydroxytryptamine receptor (509 aa).

At 1–99 the chain is on the extracellular side; the sequence is MANFTFGDLA…YSHEHLVLTS (99 aa). N-linked (GlcNAc...) asparagine glycosylation is found at asparagine 3, asparagine 47, asparagine 58, asparagine 68, asparagine 72, and asparagine 78. Residues 100 to 122 traverse the membrane as a helical segment; that stretch reads VILGLFVLCCIIGNCFVIAAVML. Residues 123–132 lie on the Cytoplasmic side of the membrane; the sequence is ERSLHNVANY. The helical transmembrane segment at 133–154 threads the bilayer; that stretch reads LILSLAVADLMVAVLVMPLSVV. The Extracellular segment spans residues 155-169; sequence SEISKVWFLHSEVCD. A disulfide bridge connects residues cysteine 168 and cysteine 246. A helical membrane pass occupies residues 170–191; sequence MWISVDVLCCTASILHLVAIAM. The Cytoplasmic segment spans residues 192-210; it reads DRYWAVTSIDYIRRRSARR. The helical transmembrane segment at 211-233 threads the bilayer; it reads ILLMIMVVWIVALFISIPPLFGW. The Extracellular portion of the chain corresponds to 234–259; the sequence is RDPNNDPDKTGTCIISQDKGYTIFST. A helical transmembrane segment spans residues 260-281; the sequence is VGAFYLPMLVMMIIYIRIWLVA. Residues 282–432 are Cytoplasmic-facing; it reads RSRIRKDKFQ…LKRERKAART (151 aa). The disordered stretch occupies residues 323 to 372; that stretch reads SPDSTTEKKKRRAPFKSYGCSPRPERKKNRAKKLPENANGVNSNSSSSER. The helical transmembrane segment at 433–456 threads the bilayer; that stretch reads LAIITGAFLICWLPFFIIALIGPF. Topologically, residues 457–465 are extracellular; sequence VDPEGIPPF. The helical transmembrane segment at 466-488 threads the bilayer; sequence ARSFVLWLGYFNSLLNPIIYTIF. The Cytoplasmic segment spans residues 489-509; it reads SPEFRSAFQKILFGKYRRGHR.

Belongs to the G-protein coupled receptor 1 family.

The protein resides in the cell membrane. This is a receptor for 5-hydroxytryptamine (serotonin), a biogenic hormone that function as a neurotransmitter, a hormone, and a mitogen. The sequence is that of 5-hydroxytryptamine receptor from Lymnaea stagnalis (Great pond snail).